Consider the following 425-residue polypeptide: MKLDTSHMRYLTTDDFRVLQAVEQGSRSHEVVPTPLIHQISGMRSQSGTNRAISDLAKLSLISKMRNVKYDGYRLTYNGIDYLALKTMLNRDTVYSVGNTIGVGKESDIYKVSDKNGNPRVMKIHRLGRTSFHSVRNNRDYLKKSNQGANWMHLSRLAANKEYQFMSMLYSKGFKVPEPFDNSRHIVVMELIEGYPMRRLRKHKNIPKLYSDLMCFIVDLANSGLIHCDFNEFNIMIKDKLEDENDCGFVVIDFPQCISIQHQDADYYFQRDVDCIRRFFKKKLKYEPKPDSSMLDTEGFGDGYKYAYPDFKRDVKRTDNLDELVQASGFSKKHPGDRGLETAVESMRNAVYNSDDDMSNDEAEEENGEGDYSEEDEYYDSELDNESSEDDSEDAQEEENERIIEALSSGVENLKMDKLGNYILE.

The Protein kinase domain occupies 95–257; that stretch reads YSVGNTIGVG…GFVVIDFPQC (163 aa). K123 provides a ligand contact to ATP. D229 (proton acceptor) is an active-site residue. S346 is subject to Phosphoserine. The segment at 350-420 is disordered; it reads AVYNSDDDMS…VENLKMDKLG (71 aa). A compositionally biased stretch (acidic residues) spans 354–400; it reads SDDDMSNDEAEEENGEGDYSEEDEYYDSELDNESSEDDSEDAQEEEN.

The protein belongs to the protein kinase superfamily. RIO-type Ser/Thr kinase family. As to quaternary structure, component of a late pre-40S ribosomal particle, composed of the 40S ribosomal proteins and the non-ribosomal factors DIM1, DIM2, ENP1, HRR25, LTV1, NOB1, RIO2 and TSR1. The cofactor is Mg(2+). Autophosphorylated.

It is found in the cytoplasm. The protein resides in the nucleus. It carries out the reaction L-seryl-[protein] + ATP = O-phospho-L-seryl-[protein] + ADP + H(+). It catalyses the reaction L-threonyl-[protein] + ATP = O-phospho-L-threonyl-[protein] + ADP + H(+). In terms of biological role, required for the final endonucleolytic cleavage of 20S pre-rRNA at site D in the cytoplasm, converting it into the mature 18S rRNA. Involved in normal export of the pre-40S particles from the nucleus to the cytoplasm. No longer associates with pre-40S subunits in RPS19 disruptions, suggesting it acts after the ribosomal protein in 18S rRNA maturation. In Saccharomyces cerevisiae (strain ATCC 204508 / S288c) (Baker's yeast), this protein is Serine/threonine-protein kinase RIO2 (RIO2).